The sequence spans 58 residues: U8-ctenitoxin-Pr1a (58 aa).

Intrachain disulfides connect C2-C16, C9-C22, C15-C40, C24-C38, and C48-C55.

As to expression, expressed by the venom gland.

Its subcellular location is the secreted. In terms of biological role, no toxic effects on mice at dose levels of 5 ug per mouse. May be toxic to insects. The polypeptide is U8-ctenitoxin-Pr1a (Phoneutria reidyi (Brazilian Amazonian armed spider)).